A 203-amino-acid chain; its full sequence is Phosphatidylglycerophosphatase B (203 aa).

Met-1 is a topological domain (cytoplasmic). Residues 2 to 17 traverse the membrane as a helical segment; it reads YKPVSLFLFFLILAAA. The Extracellular portion of the chain corresponds to 18–55; the sequence is IHTNAVQSADEAISKAAVLIRQPWLNEVMTGITHLGAS. The helical transmembrane segment at 56-74 threads the bilayer; sequence SFLLPLIVIIGAGMFFYRK. The Cytoplasmic portion of the chain corresponds to 75–78; the sequence is TWDG. A helical transmembrane segment spans residues 79-99; the sequence is LLMLLVFGTDRLLNKVLKEWI. The phosphatase sequence motif I stretch occupies residues 96 to 104; it reads KEWIERVRP. Topologically, residues 100 to 119 are extracellular; that stretch reads ERVRPDFAPLVHESSFSFPS. Residues 118–121 are phosphatase sequence motif II; it reads PSGH. Residues 120–139 traverse the membrane as a helical segment; sequence GHSMNAACVYPVIAYFLVKH. The Proton donors role is filled by His-121. Over 140–146 the chain is Cytoplasmic; sequence LPFLSKH. The helical transmembrane segment at 147–167 threads the bilayer; the sequence is KKMVYIIAGVIAVLVGISRVY. The tract at residues 164-175 is phosphatase sequence motif III; it reads SRVYLGVHFVTD. Residues 168-172 lie on the Extracellular side of the membrane; it reads LGVHF. The active-site Nucleophile is the His-171. A helical membrane pass occupies residues 173–196; the sequence is VTDVLGGFSLGLLLFFLVKGFDEK. Residues 197-203 are Cytoplasmic-facing; it reads IKRFRQK.

This sequence belongs to the PA-phosphatase related phosphoesterase family.

It is found in the cell membrane. The catalysed reaction is a 1,2-diacyl-sn-glycero-3-phospho-(1'-sn-glycero-3'-phosphate) + H2O = a 1,2-diacyl-sn-glycero-3-phospho-(1'-sn-glycerol) + phosphate. Its function is as follows. Catalyzes the dephosphorylation of phosphatidylglycerophosphate (PGP) to phosphatidylglycerol. Also has undecaprenyl pyrophosphate phosphatase activity, required for the biosynthesis of the lipid carrier undecaprenyl phosphate. This chain is Phosphatidylglycerophosphatase B, found in Bacillus subtilis (strain 168).